A 211-amino-acid polypeptide reads, in one-letter code: Small ribosomal subunit protein eS1 (211 aa).

Residues 192–211 (NGLPPYEAVGDRATPELASY) form a disordered region.

This sequence belongs to the eukaryotic ribosomal protein eS1 family.

In Methanopyrus kandleri (strain AV19 / DSM 6324 / JCM 9639 / NBRC 100938), this protein is Small ribosomal subunit protein eS1.